A 285-amino-acid chain; its full sequence is MSAPILRKLADLRAATAGWKRAGESIGVVPTMGALHDGHLSLVAAAKAGCDRVVVTIFVNPKQFNNPEDLAKYPRTELADASKLAPYGVDAIYVPDPDQIYPEGFATTVSVSGLTDVMEGACRPGHFDGVATVVAKLFLQTGADQAYFGEKDYQQMMLVTRMAQDLDIPITVVGCPTVREASGLAMSSRNMRLSAEGLERAGRLHPVMRQVAERLAAGASFGDLAPGAREALGAAGFVDIEYFDLRAADSLRALDRPTEPARLLVAAWLDGVRLIDNIAVSQLND.

Met32–His39 serves as a coordination point for ATP. His39 (proton donor) is an active-site residue. Gln63 lines the (R)-pantoate pocket. Residue Gln63 coordinates beta-alanine. Gly149–Asp152 is a binding site for ATP. Residue Gln155 coordinates (R)-pantoate. ATP contacts are provided by residues Val178 and Met186–Arg189.

This sequence belongs to the pantothenate synthetase family. As to quaternary structure, homodimer.

It is found in the cytoplasm. It carries out the reaction (R)-pantoate + beta-alanine + ATP = (R)-pantothenate + AMP + diphosphate + H(+). It functions in the pathway cofactor biosynthesis; (R)-pantothenate biosynthesis; (R)-pantothenate from (R)-pantoate and beta-alanine: step 1/1. Catalyzes the condensation of pantoate with beta-alanine in an ATP-dependent reaction via a pantoyl-adenylate intermediate. The polypeptide is Pantothenate synthetase (Ruegeria pomeroyi (strain ATCC 700808 / DSM 15171 / DSS-3) (Silicibacter pomeroyi)).